A 310-amino-acid polypeptide reads, in one-letter code: Olfactory receptor 5P52 (310 aa).

At Met-1 to Ile-25 the chain is on the extracellular side. A glycan (N-linked (GlcNAc...) asparagine) is linked at Asn-5. Residues Val-26–Ile-46 form a helical membrane-spanning segment. Residues Thr-47–Gln-54 lie on the Cytoplasmic side of the membrane. A helical membrane pass occupies residues Leu-55–Thr-75. At Ser-76–Ala-99 the chain is on the extracellular side. A disulfide bridge connects residues Cys-97 and Cys-189. Residues Gln-100 to Tyr-120 traverse the membrane as a helical segment. At Asp-121–Ser-133 the chain is on the cytoplasmic side. The helical transmembrane segment at Thr-134 to Val-154 threads the bilayer. Residues Asn-155–Gly-196 lie on the Extracellular side of the membrane. Residues Ile-197–Ser-217 form a helical membrane-spanning segment. At Tyr-218–Ala-237 the chain is on the cytoplasmic side. A helical membrane pass occupies residues Phe-238 to Ile-258. Residues Tyr-259 to Asn-271 lie on the Extracellular side of the membrane. A helical membrane pass occupies residues Lys-272–Leu-292. Residues Arg-293 to Ser-310 are Cytoplasmic-facing.

Belongs to the G-protein coupled receptor 1 family.

It is found in the cell membrane. Functionally, potential odorant receptor. The sequence is that of Olfactory receptor 5P52 from Mus musculus (Mouse).